Consider the following 340-residue polypeptide: Mitochondrial import receptor subunit TOM40 homolog 2 (340 aa).

Positions 1-37 (MGNVMASTADAESSRGRGHLSAGLRLPEAPQYSGGVP) are disordered.

It belongs to the Tom40 family. In terms of assembly, forms part of the preprotein translocase of the outer mitochondrial membrane (TOM complex). Interacts with mitochondrial targeting sequences. As to expression, only expressed in the male germline, detected in primary spermatocytes as well as post-meiotic stages. Not detected in stem cells and spermatogonia near the tip of the testis.

It localises to the mitochondrion outer membrane. In terms of biological role, channel-forming protein essential for import of protein precursors into mitochondria. The protein is Mitochondrial import receptor subunit TOM40 homolog 2 of Drosophila melanogaster (Fruit fly).